The chain runs to 502 residues: Carbon catabolite-derepressing protein kinase (502 aa).

One can recognise a Protein kinase domain in the interval 14-269; it reads YYLGKILGVG…IGEIRKHSWF (256 aa). ATP-binding positions include 20–28 and Lys43; that span reads LGVGTFAKV. Catalysis depends on Asp140, which acts as the Proton acceptor. Thr173 bears the Phosphothreonine; by autocatalysis mark. The UBA domain maps to 290-330; it reads MIDEDTLRDVVKLGYDKDHVCESLCNRLQNEETVAYYLLLD. In terms of domain architecture, KA1 spans 453-501; that stretch reads NSRLPAVIKFEIQLYKTKDDKYLLDMQRVTGPQLLFLEFCAAFLTNLRV.

Belongs to the protein kinase superfamily. CAMK Ser/Thr protein kinase family. SNF1 subfamily.

The catalysed reaction is L-seryl-[protein] + ATP = O-phospho-L-seryl-[protein] + ADP + H(+). It carries out the reaction L-threonyl-[protein] + ATP = O-phospho-L-threonyl-[protein] + ADP + H(+). Functionally, essential for release from glucose repression. The sequence is that of Carbon catabolite-derepressing protein kinase (RKIN1) from Secale cereale (Rye).